We begin with the raw amino-acid sequence, 275 residues long: tRNA (guanine-N(1)-)-methyltransferase (275 aa).

S-adenosyl-L-methionine is bound by residues G124 and I149–L154.

It belongs to the RNA methyltransferase TrmD family. In terms of assembly, homodimer.

Its subcellular location is the cytoplasm. The enzyme catalyses guanosine(37) in tRNA + S-adenosyl-L-methionine = N(1)-methylguanosine(37) in tRNA + S-adenosyl-L-homocysteine + H(+). In terms of biological role, specifically methylates guanosine-37 in various tRNAs. In Bifidobacterium animalis subsp. lactis (strain AD011), this protein is tRNA (guanine-N(1)-)-methyltransferase.